A 593-amino-acid polypeptide reads, in one-letter code: Gamma-humulene synthase (593 aa).

Positions 1-26 are enriched in polar residues; sequence MAQISESVSPSTDLKSTESSITSNRH. The disordered stretch occupies residues 1–34; sequence MAQISESVSPSTDLKSTESSITSNRHGNMWEDDR. Residues Asp343, Asp347, Asp488, and Glu496 each contribute to the Mg(2+) site. A DDXXD motif motif is present at residues 343-347; it reads DDLYD.

This sequence belongs to the terpene synthase family. Tpsd subfamily. Mg(2+) serves as cofactor. It depends on K(+) as a cofactor.

It localises to the cytoplasm. The enzyme catalyses (2E,6E)-farnesyl diphosphate = gamma-humulene + diphosphate. It carries out the reaction (2E,6E)-farnesyl diphosphate = sibirene + diphosphate. The catalysed reaction is (2E,6E)-farnesyl diphosphate = longifolene + diphosphate. It catalyses the reaction (2E,6E)-farnesyl diphosphate = beta-himachalene + diphosphate. The enzyme catalyses (2E,6E)-farnesyl diphosphate = gamma-himachalene + diphosphate. It carries out the reaction (2E,6E)-farnesyl diphosphate = alpha-himachalene + diphosphate. Its pathway is terpene metabolism; oleoresin biosynthesis. In terms of biological role, involved in defensive oleoresin formation in conifers in response to insect attack or other injury. Involved in 52 sesquiterpene (C15) olefins biosynthesis. The chain is Gamma-humulene synthase (ag5) from Abies grandis (Grand fir).